Consider the following 440-residue polypeptide: 6-phospho-alpha-glucosidase (440 aa).

4 to 70 (FSVVIAGGGS…PEIEFSYTTD (67 aa)) contributes to the NAD(+) binding site. Substrate contacts are provided by Arg93 and Asn147. Position 169 (Cys169) interacts with Mn(2+). Asp170 (proton donor) is an active-site residue. His200 is a binding site for Mn(2+). The active-site Proton acceptor is the Tyr263. A substrate-binding site is contributed by Arg283.

Homodimer. It depends on NAD(+) as a cofactor. Requires Mn(2+) as cofactor. Co(2+) serves as cofactor. Ni(2+) is required as a cofactor.

It carries out the reaction alpha-maltose 6'-phosphate + H2O = D-glucose 6-phosphate + D-glucose. The protein operates within glycan biosynthesis; sucrose metabolism. Its function is as follows. Is involved in the catabolism of alpha-glycosides accumulated via a phosphoenolpyruvate-dependent phosphotransferase system (PEP-PTS). Hydrolyzes a wide variety of 6-phospho-alpha-D-glucosides including maltose-6'-phosphate, isomaltose-6'-phosphate, maltitol-6-phosphate, trehalose-6-phosphate and the 6'-phosphorylated derivatives of the five linkage-isomeric alpha-D-glucosyl-D-fructoses: trehalulose-6'-phosphate, turanose-6'-phosphate, maltulose-6'-phosphate, leucrose-6'-phosphate, and palatinose-6'-phosphate. However, sucrose-6-phosphate is not a substrate for this enzyme. The polypeptide is 6-phospho-alpha-glucosidase (Klebsiella pneumoniae).